A 285-amino-acid polypeptide reads, in one-letter code: Phosphatidylserine decarboxylase proenzyme (285 aa).

Residues Asp96, His152, and Ser250 each act as charge relay system; for autoendoproteolytic cleavage activity in the active site. Ser250 functions as the Schiff-base intermediate with substrate; via pyruvic acid; for decarboxylase activity in the catalytic mechanism. Ser250 bears the Pyruvic acid (Ser); by autocatalysis mark.

It belongs to the phosphatidylserine decarboxylase family. PSD-B subfamily. Prokaryotic type I sub-subfamily. In terms of assembly, heterodimer of a large membrane-associated beta subunit and a small pyruvoyl-containing alpha subunit. It depends on pyruvate as a cofactor. In terms of processing, is synthesized initially as an inactive proenzyme. Formation of the active enzyme involves a self-maturation process in which the active site pyruvoyl group is generated from an internal serine residue via an autocatalytic post-translational modification. Two non-identical subunits are generated from the proenzyme in this reaction, and the pyruvate is formed at the N-terminus of the alpha chain, which is derived from the carboxyl end of the proenzyme. The autoendoproteolytic cleavage occurs by a canonical serine protease mechanism, in which the side chain hydroxyl group of the serine supplies its oxygen atom to form the C-terminus of the beta chain, while the remainder of the serine residue undergoes an oxidative deamination to produce ammonia and the pyruvoyl prosthetic group on the alpha chain. During this reaction, the Ser that is part of the protease active site of the proenzyme becomes the pyruvoyl prosthetic group, which constitutes an essential element of the active site of the mature decarboxylase.

It is found in the cell membrane. The catalysed reaction is a 1,2-diacyl-sn-glycero-3-phospho-L-serine + H(+) = a 1,2-diacyl-sn-glycero-3-phosphoethanolamine + CO2. It functions in the pathway phospholipid metabolism; phosphatidylethanolamine biosynthesis; phosphatidylethanolamine from CDP-diacylglycerol: step 2/2. In terms of biological role, catalyzes the formation of phosphatidylethanolamine (PtdEtn) from phosphatidylserine (PtdSer). This is Phosphatidylserine decarboxylase proenzyme from Acinetobacter baylyi (strain ATCC 33305 / BD413 / ADP1).